The sequence spans 179 residues: ATP synthase subunit delta (179 aa).

Belongs to the ATPase delta chain family. F-type ATPases have 2 components, F(1) - the catalytic core - and F(0) - the membrane proton channel. F(1) has five subunits: alpha(3), beta(3), gamma(1), delta(1), epsilon(1). F(0) has three main subunits: a(1), b(2) and c(10-14). The alpha and beta chains form an alternating ring which encloses part of the gamma chain. F(1) is attached to F(0) by a central stalk formed by the gamma and epsilon chains, while a peripheral stalk is formed by the delta and b chains.

The protein resides in the cell membrane. In terms of biological role, f(1)F(0) ATP synthase produces ATP from ADP in the presence of a proton or sodium gradient. F-type ATPases consist of two structural domains, F(1) containing the extramembraneous catalytic core and F(0) containing the membrane proton channel, linked together by a central stalk and a peripheral stalk. During catalysis, ATP synthesis in the catalytic domain of F(1) is coupled via a rotary mechanism of the central stalk subunits to proton translocation. This protein is part of the stalk that links CF(0) to CF(1). It either transmits conformational changes from CF(0) to CF(1) or is implicated in proton conduction. This Listeria welshimeri serovar 6b (strain ATCC 35897 / DSM 20650 / CCUG 15529 / CIP 8149 / NCTC 11857 / SLCC 5334 / V8) protein is ATP synthase subunit delta.